The following is a 121-amino-acid chain: MSEIQDYNSSVSDPSSRKFETFSYLPELGVEKIRKQVEYIVSKGWNPAVEHTEPENAFDHYWYMWKLPMFGETDVDAILAEAEACHKAHPSHHVRLIGYDNYAQSQGTAMVIFRGPISAKC.

The protein belongs to the RuBisCO small chain family. As to quaternary structure, heterohexadecamer of 8 large and 8 small subunits.

Its function is as follows. RuBisCO catalyzes two reactions: the carboxylation of D-ribulose 1,5-bisphosphate, the primary event in carbon dioxide fixation, as well as the oxidative fragmentation of the pentose substrate. Both reactions occur simultaneously and in competition at the same active site. Although the small subunit is not catalytic it is essential for maximal activity. The protein is Ribulose bisphosphate carboxylase small subunit of Alvinoconcha hessleri symbiotic bacterium.